Consider the following 441-residue polypeptide: Cysteine--tRNA ligase (441 aa).

C24 lines the Zn(2+) pocket. The 'HIGH' region motif lies at 26-36; sequence PTVYNYIHIGN. The Zn(2+) site is built by C204, H230, and E234. The 'KMSKS' region signature appears at 262–266; sequence KMSKS. An ATP-binding site is contributed by K265.

This sequence belongs to the class-I aminoacyl-tRNA synthetase family. Monomer. It depends on Zn(2+) as a cofactor.

It is found in the cytoplasm. It carries out the reaction tRNA(Cys) + L-cysteine + ATP = L-cysteinyl-tRNA(Cys) + AMP + diphosphate. This Mycoplasma mycoides subsp. mycoides SC (strain CCUG 32753 / NCTC 10114 / PG1) protein is Cysteine--tRNA ligase.